The chain runs to 398 residues: 1-deoxy-D-xylulose 5-phosphate reductoisomerase (398 aa).

Positions 10, 11, 12, 13, 38, and 124 each coordinate NADPH. 1-deoxy-D-xylulose 5-phosphate is bound at residue lysine 125. Position 126 (glutamate 126) interacts with NADPH. Aspartate 150 serves as a coordination point for Mn(2+). Residues serine 151, glutamate 152, serine 186, and histidine 209 each contribute to the 1-deoxy-D-xylulose 5-phosphate site. Residue glutamate 152 coordinates Mn(2+). Glycine 215 serves as a coordination point for NADPH. 4 residues coordinate 1-deoxy-D-xylulose 5-phosphate: serine 222, asparagine 227, lysine 228, and glutamate 231. Glutamate 231 contacts Mn(2+).

The protein belongs to the DXR family. Mg(2+) serves as cofactor. Mn(2+) is required as a cofactor.

It carries out the reaction 2-C-methyl-D-erythritol 4-phosphate + NADP(+) = 1-deoxy-D-xylulose 5-phosphate + NADPH + H(+). It participates in isoprenoid biosynthesis; isopentenyl diphosphate biosynthesis via DXP pathway; isopentenyl diphosphate from 1-deoxy-D-xylulose 5-phosphate: step 1/6. Catalyzes the NADPH-dependent rearrangement and reduction of 1-deoxy-D-xylulose-5-phosphate (DXP) to 2-C-methyl-D-erythritol 4-phosphate (MEP). The polypeptide is 1-deoxy-D-xylulose 5-phosphate reductoisomerase (Baumannia cicadellinicola subsp. Homalodisca coagulata).